We begin with the raw amino-acid sequence, 355 residues long: Palmitoyltransferase ERF2 (355 aa).

Residues 1–15 are compositionally biased toward basic and acidic residues; the sequence is MIERFMRNDKDRPSA. Residues 1 to 23 form a disordered region; sequence MIERFMRNDKDRPSARDGQQNGT. Residues 1 to 72 are Cytoplasmic-facing; that stretch reads MIERFMRNDK…GGRVRTVTKT (72 aa). Residues 73–93 traverse the membrane as a helical segment; it reads SVYSIVVFAMFIVPLILFSIF. At 94–108 the chain is on the lumenal side; it reads ECNYLWHHKGTNWKP. Residues 109 to 129 traverse the membrane as a helical segment; that stretch reads AIVILYYFYLLTICSFLRAAC. Residues 130-215 lie on the Cytoplasmic side of the membrane; the sequence is SDPGIVPRNV…NNCIGKRNYR (86 aa). The 51-residue stretch at 172–222 folds into the DHHC domain; that stretch reads KYCQTCRIWRPPRSAHCSVCDVCVLSHDHHCKWLNNCIGKRNYRFFLEFLM. Catalysis depends on cysteine 202, which acts as the S-palmitoyl cysteine intermediate. A helical transmembrane segment spans residues 216-236; sequence FFLEFLMASTISCILLILLSS. The Lumenal portion of the chain corresponds to 237-249; the sequence is FRLSYSPQVRYTP. The chain crosses the membrane as a helical span at residues 250 to 270; it reads VSLLIICYCGLGIWYPLILFI. Topologically, residues 271-355 are cytoplasmic; sequence YHIFLAGTQQ…LPEAHSFETV (85 aa).

Belongs to the DHHC palmitoyltransferase family. ERF2/ZDHHC9 subfamily. In terms of assembly, interacts with ERF4. In terms of processing, autopalmitoylated.

The protein resides in the endoplasmic reticulum membrane. The enzyme catalyses L-cysteinyl-[protein] + hexadecanoyl-CoA = S-hexadecanoyl-L-cysteinyl-[protein] + CoA. Its function is as follows. The ERF2-ERF4 complex is a palmitoyltransferase specific for Ras proteins. This Kluyveromyces lactis (strain ATCC 8585 / CBS 2359 / DSM 70799 / NBRC 1267 / NRRL Y-1140 / WM37) (Yeast) protein is Palmitoyltransferase ERF2 (ERF2).